A 213-amino-acid chain; its full sequence is Orotate phosphoribosyltransferase (213 aa).

5-phospho-alpha-D-ribose 1-diphosphate is bound at residue Lys26. Residue 34-35 participates in orotate binding; that stretch reads FF. Residues 72-73, Arg99, Lys100, Lys103, His105, and 124-132 contribute to the 5-phospho-alpha-D-ribose 1-diphosphate site; these read YK and DDVITAGTA. Orotate-binding residues include Thr128 and Arg156.

The protein belongs to the purine/pyrimidine phosphoribosyltransferase family. PyrE subfamily. Homodimer. Requires Mg(2+) as cofactor.

It catalyses the reaction orotidine 5'-phosphate + diphosphate = orotate + 5-phospho-alpha-D-ribose 1-diphosphate. The protein operates within pyrimidine metabolism; UMP biosynthesis via de novo pathway; UMP from orotate: step 1/2. Its function is as follows. Catalyzes the transfer of a ribosyl phosphate group from 5-phosphoribose 1-diphosphate to orotate, leading to the formation of orotidine monophosphate (OMP). The sequence is that of Orotate phosphoribosyltransferase from Haemophilus influenzae (strain 86-028NP).